We begin with the raw amino-acid sequence, 877 residues long: Phosphoenolpyruvate carboxylase (877 aa).

Catalysis depends on residues histidine 138 and lysine 544.

This sequence belongs to the PEPCase type 1 family. Mg(2+) serves as cofactor.

It carries out the reaction oxaloacetate + phosphate = phosphoenolpyruvate + hydrogencarbonate. Functionally, forms oxaloacetate, a four-carbon dicarboxylic acid source for the tricarboxylic acid cycle. This Vibrio vulnificus (strain YJ016) protein is Phosphoenolpyruvate carboxylase.